Consider the following 256-residue polypeptide: Small ribosomal subunit protein eS1B (256 aa).

The residue at position 2 (Ala2) is an N-acetylalanine; partial.

The protein belongs to the eukaryotic ribosomal protein eS1 family. As to quaternary structure, component of the small ribosomal subunit. Mature ribosomes consist of a small (40S) and a large (60S) subunit. The 40S subunit contains about 33 different proteins and 1 molecule of RNA (18S). The 60S subunit contains about 49 different proteins and 3 molecules of RNA (25S, 5.8S and 5S).

The protein resides in the cytoplasm. This is Small ribosomal subunit protein eS1B from Clavispora lusitaniae (strain ATCC 42720) (Yeast).